A 112-amino-acid chain; its full sequence is Large ribosomal subunit protein bL20c (112 aa).

This sequence belongs to the bacterial ribosomal protein bL20 family.

Its subcellular location is the plastid. It is found in the chloroplast. Functionally, binds directly to 23S ribosomal RNA and is necessary for the in vitro assembly process of the 50S ribosomal subunit. It is not involved in the protein synthesizing functions of that subunit. This chain is Large ribosomal subunit protein bL20c (rpl20), found in Anthoceros angustus (Hornwort).